The following is a 282-amino-acid chain: MAYNKESKQRRFLFAIDLDGTLLADSANGTVHPKTEEAIKKAVAQGHIVSIITGRPWRSTLPVYEKLGLNAIVGNYNGAHIHNPADPFFIPAITYLDLNEVLYILGDEKVKKEITNYAIEGPDWVQLMHRDPNLERVFGFNQATKFRECINLEKIPLKPTGIVFDVKPDTDVLELLTYLKRRYGDLGEFSSWSKGEGLSPVFDITSIGIDKGKVISLIMRYYNIDIDDTVAMGDSYNDLSMYNVANVCVSPANAEPLIKKMSTVVMKQTNKEGAVGYFIDHS.

Asp17 functions as the Nucleophile in the catalytic mechanism. Asp17 is a binding site for Mg(2+). Leu18 contributes to the phosphate binding site. Asp19 provides a ligand contact to Mg(2+). Phosphate is bound by residues 53-54 (TG) and Lys211. 2 residues coordinate Mg(2+): Asp234 and Ser235. Asn237 serves as a coordination point for phosphate.

The protein belongs to the HAD-like hydrolase superfamily. Cof family. Mg(2+) is required as a cofactor.

This chain is Putative phosphatase in upp 3'region, found in Metamycoplasma hominis (Mycoplasma hominis).